We begin with the raw amino-acid sequence, 368 residues long: Mitogen-activated protein kinase KSS1 (368 aa).

A Protein kinase domain is found at 13-313 (YKLVDLIGEG…AAEALRHPYL (301 aa)). Residues 19–27 (IGEGAYGTV) and Lys-42 contribute to the ATP site. The Proton acceptor role is filled by Asp-143. Thr-183 bears the Phosphothreonine mark. Positions 183 to 185 (TEY) match the TXY motif. Tyr-185 is subject to Phosphotyrosine.

It belongs to the protein kinase superfamily. Ser/Thr protein kinase family. MAP kinase subfamily. HOG1 sub-subfamily. In the nucleus, KSS1 forms a complex with DIG1, DIG2 and STE12; in contrast to FUS3 the interaction of KSS1 with STE12 does not depend on DIG1 and DIG2. Phosphorylated KSS1 shows reduced interaction with STE12. During pheromone activation and phosphorylation, KSS1 forms a membrane-associated complex with the scaffold protein STE5, the MAPKK STE7, the MAPKKK STE11, and the G-protein beta subunit GBB/STE4; interacting directly with POF1, STE7 and STE5 proteins. Requires Mg(2+) as cofactor. In terms of processing, dually phosphorylated on Thr-183 and Tyr-185 by STE7 in response to pheromone or carbon/nitrogen limitation, which activates the enzyme. Activated FUS3 down-regulates KSS1 phosphorylation.

The protein resides in the nucleus. Its subcellular location is the cytoplasm. It localises to the periplasm. The enzyme catalyses L-seryl-[protein] + ATP = O-phospho-L-seryl-[protein] + ADP + H(+). It catalyses the reaction L-threonyl-[protein] + ATP = O-phospho-L-threonyl-[protein] + ADP + H(+). With respect to regulation, activated by tyrosine and threonine phosphorylation after pheromone treatment or carbon/nitrogen limitation. Functionally, together with closely related FUS3, KSS1 is the final kinase in the signal transduction cascade regulating activation/repression of the mating and filamentation pathways, induced by pheromone and nitrogen/carbon limitation, respectively. Phosphorylated KSS1 activates both pathways, whereas activated FUS3 activates the mating but suppresses the filamentation pathway. KSS1 activity is down-regulated by FUS3 during pheromone induction to prevent inappropriate activation of the filamentation pathway. During induction of filamentation, KSS1 activates the transcription factor STE12 resulting in its binding to and activation of filamentation specific genes. Non-activated KSS1 has a kinase-independent repressive effect on STE12 transcriptional activity, that is mediated by direct binding to STE12 and depends on the presence of DIG1 and DIG2, and that is required for the suppression of filamentation under normal growth conditions. SSN3/SRB10 contributes further to the suppression of filamentation under these conditions by reducing STE12 stability independent of KSS1. FUS3 can partially compensate for the lack of KSS1 but filamentation becomes constitutively induced at a low level in the absence of any signal. KSS1 phosphorylates STE7, STE5, FAR1, DIG1, DIG2, STE12, and SST2. The protein is Mitogen-activated protein kinase KSS1 (KSS1) of Saccharomyces cerevisiae (strain ATCC 204508 / S288c) (Baker's yeast).